The following is a 204-amino-acid chain: Leucyl/phenylalanyl-tRNA--protein transferase (204 aa).

Belongs to the L/F-transferase family.

The protein resides in the cytoplasm. The enzyme catalyses N-terminal L-lysyl-[protein] + L-leucyl-tRNA(Leu) = N-terminal L-leucyl-L-lysyl-[protein] + tRNA(Leu) + H(+). The catalysed reaction is N-terminal L-arginyl-[protein] + L-leucyl-tRNA(Leu) = N-terminal L-leucyl-L-arginyl-[protein] + tRNA(Leu) + H(+). It catalyses the reaction L-phenylalanyl-tRNA(Phe) + an N-terminal L-alpha-aminoacyl-[protein] = an N-terminal L-phenylalanyl-L-alpha-aminoacyl-[protein] + tRNA(Phe). Functionally, functions in the N-end rule pathway of protein degradation where it conjugates Leu, Phe and, less efficiently, Met from aminoacyl-tRNAs to the N-termini of proteins containing an N-terminal arginine or lysine. The sequence is that of Leucyl/phenylalanyl-tRNA--protein transferase from Sinorhizobium fredii (strain NBRC 101917 / NGR234).